The chain runs to 182 residues: Translation initiation factor IF-3 (182 aa).

This sequence belongs to the IF-3 family. In terms of assembly, monomer.

The protein localises to the cytoplasm. Functionally, IF-3 binds to the 30S ribosomal subunit and shifts the equilibrium between 70S ribosomes and their 50S and 30S subunits in favor of the free subunits, thus enhancing the availability of 30S subunits on which protein synthesis initiation begins. The polypeptide is Translation initiation factor IF-3 (Endomicrobium trichonymphae).